The primary structure comprises 356 residues: 7,8-didemethyl-8-hydroxy-5-deazariboflavin synthase (356 aa).

The 241-residue stretch at 40–280 (ITYSKNVFIP…KDISIQVPPN (241 aa)) folds into the Radical SAM core domain. [4Fe-4S] cluster-binding residues include cysteine 54, cysteine 58, and cysteine 61.

The protein belongs to the radical SAM superfamily. CofG family. In terms of assembly, consists of two subunits, CofG and CofH. It depends on [4Fe-4S] cluster as a cofactor.

The catalysed reaction is 5-amino-5-(4-hydroxybenzyl)-6-(D-ribitylimino)-5,6-dihydrouracil + S-adenosyl-L-methionine = 7,8-didemethyl-8-hydroxy-5-deazariboflavin + 5'-deoxyadenosine + L-methionine + NH4(+) + H(+). The protein operates within cofactor biosynthesis; coenzyme F0 biosynthesis. Catalyzes the radical-mediated synthesis of 7,8-didemethyl-8-hydroxy-5-deazariboflavin from 5-amino-5-(4-hydroxybenzyl)-6-(D-ribitylimino)-5,6-dihydrouracil. This is 7,8-didemethyl-8-hydroxy-5-deazariboflavin synthase from Methanococcus aeolicus (strain ATCC BAA-1280 / DSM 17508 / OCM 812 / Nankai-3).